Here is a 505-residue protein sequence, read N- to C-terminus: RNA-binding region-containing protein 3 (505 aa).

The RRM 1 domain occupies 15 to 90 (KTLIIRHLPR…RTLVVEFAKD (76 aa)). Disordered regions lie at residues 96 to 123 (ILKDPPVSDRTAAAVAEKEKKEKQQPSV), 193 to 236 (PPMF…EEER), 354 to 374 (AQVPRQEEEQEEDEDIPSEFI), and 486 to 505 (ARSAKPKQESADPKKGGRKH). A compositionally biased stretch (pro residues) spans 193 to 214 (PPMFEMPSGPLPPPFPPENPPL). Composition is skewed to acidic residues over residues 221-235 (GSEEESEYESEDEEE) and 361-370 (EEQEEDEDIP). The 84-residue stretch at 405 to 488 (CRLYVKNVAK…KPLVVQFARS (84 aa)) folds into the RRM 2 domain. Basic and acidic residues predominate over residues 491 to 505 (PKQESADPKKGGRKH).

In terms of assembly, component of the U11/U12 snRNPs that are part of the U12-type spliceosome.

Its subcellular location is the nucleus. Functionally, participates in pre-mRNA U12-dependent splicing, performed by the minor spliceosome which removes U12-type introns. U12-type introns comprise less than 1% of all non-coding sequences. The chain is RNA-binding region-containing protein 3 from Danio rerio (Zebrafish).